Consider the following 1134-residue polypeptide: Translation initiation factor IF-2 (1134 aa).

Disordered regions lie at residues 55–465 (AQKS…HIIG) and 491–524 (LARP…QRQR). Composition is skewed to polar residues over residues 56–65 (QKSSNSSSPP), 83–105 (SPPT…SSLK), 137–147 (PSISKNNSLKV), 208–234 (QIKQ…IQTN), and 251–264 (VQSQ…NNNL). Basic and acidic residues-rich tracts occupy residues 391-403 (KRGD…KKDG) and 438-450 (PDWD…EALR). 2 stretches are compositionally biased toward basic residues: residues 495-504 (GKPKASKKSG) and 511-524 (LRKR…QRQR). Positions 626-798 (RRPPVVTVMG…ILLVTEVEDL (173 aa)) constitute a tr-type G domain. Positions 635–642 (GHVDHGKT) are G1. Position 635–642 (635–642 (GHVDHGKT)) interacts with GTP. Residues 660–664 (GITQH) are G2. Positions 685–688 (DTPG) are G3. Residues 685 to 689 (DTPGH) and 739 to 742 (NKID) contribute to the GTP site. The G4 stretch occupies residues 739–742 (NKID). Residues 775–777 (SAI) form a G5 region.

The protein belongs to the TRAFAC class translation factor GTPase superfamily. Classic translation factor GTPase family. IF-2 subfamily.

The protein localises to the cytoplasm. Its function is as follows. One of the essential components for the initiation of protein synthesis. Protects formylmethionyl-tRNA from spontaneous hydrolysis and promotes its binding to the 30S ribosomal subunits. Also involved in the hydrolysis of GTP during the formation of the 70S ribosomal complex. This Prochlorococcus marinus (strain SARG / CCMP1375 / SS120) protein is Translation initiation factor IF-2.